The primary structure comprises 753 residues: Catalase-peroxidase (753 aa).

Residues 1 to 39 (MLPRVNKRSNCIAKKTSNRLISAVSLAIASLCISQSALA) form the signal peptide. The tryptophyl-tyrosyl-methioninium (Trp-Tyr) (with M-267) cross-link spans 118 to 241 (WHSTGTYRMS…LAAVQMGLIY (124 aa)). The Proton acceptor role is filled by H119. Positions 241 to 267 (YVNPEGPNGNHDPISAAADIRDVFARM) form a cross-link, tryptophyl-tyrosyl-methioninium (Tyr-Met) (with W-118). H282 contributes to the heme b binding site.

It belongs to the peroxidase family. Peroxidase/catalase subfamily. Homodimer or homotetramer. Heme b serves as cofactor. Post-translationally, formation of the three residue Trp-Tyr-Met cross-link is important for the catalase, but not the peroxidase activity of the enzyme.

It carries out the reaction H2O2 + AH2 = A + 2 H2O. The enzyme catalyses 2 H2O2 = O2 + 2 H2O. Functionally, bifunctional enzyme with both catalase and broad-spectrum peroxidase activity. The polypeptide is Catalase-peroxidase (Pseudoalteromonas atlantica (strain T6c / ATCC BAA-1087)).